The following is a 187-amino-acid chain: Protein GrpE (187 aa).

The disordered stretch occupies residues 1-23 (MNNEKELKKEETSVENKEKKVAT).

Belongs to the GrpE family. Homodimer.

It is found in the cytoplasm. Functionally, participates actively in the response to hyperosmotic and heat shock by preventing the aggregation of stress-denatured proteins, in association with DnaK and GrpE. It is the nucleotide exchange factor for DnaK and may function as a thermosensor. Unfolded proteins bind initially to DnaJ; upon interaction with the DnaJ-bound protein, DnaK hydrolyzes its bound ATP, resulting in the formation of a stable complex. GrpE releases ADP from DnaK; ATP binding to DnaK triggers the release of the substrate protein, thus completing the reaction cycle. Several rounds of ATP-dependent interactions between DnaJ, DnaK and GrpE are required for fully efficient folding. In Mesoplasma florum (strain ATCC 33453 / NBRC 100688 / NCTC 11704 / L1) (Acholeplasma florum), this protein is Protein GrpE.